The sequence spans 464 residues: Protein ABHD18 (464 aa).

The signal sequence occupies residues 1 to 24; that stretch reads MGVSKLDILYRRLLLTKLFIRGWG. N-linked (GlcNAc...) asparagine glycosylation is present at Asn-341.

Belongs to the AB hydrolase superfamily.

The protein resides in the secreted. The protein is Protein ABHD18 of Rattus norvegicus (Rat).